A 1095-amino-acid polypeptide reads, in one-letter code: Putative patatin-like phospholipase domain-containing protein M110.7 (1095 aa).

The helical transmembrane segment at 9–29 threads the bilayer; sequence LLLIFENILELCMCITLVILI. A disordered region spans residues 75–113; that stretch reads HKKRSSKEEMTPDKKRDSSEKISKQPPRELFEPNEQEQV. Positions 80-105 are enriched in basic and acidic residues; the sequence is SKEEMTPDKKRDSSEKISKQPPRELF. A nucleoside 3',5'-cyclic phosphate contacts are provided by residues 144–237, 327–416, and 450–509; these read VETL…LTSF, RKYE…IQFL, and IETG…TVMA. A PNPLA domain is found at 768–935; that stretch reads IVFGGGGARG…VNNLPADIMR (168 aa). Positions 772 to 777 match the GXGXXG motif; the sequence is GGGARG. The GXSXG signature appears at 799–803; that stretch reads GTSIG. The active-site Nucleophile is Ser801. Catalysis depends on Asp922, which acts as the Proton acceptor. A DGA/G motif is present at residues 922-924; that stretch reads DGA.

The protein belongs to the NTE family.

Its subcellular location is the membrane. In Caenorhabditis elegans, this protein is Putative patatin-like phospholipase domain-containing protein M110.7.